The sequence spans 158 residues: Protein-export protein SecB (158 aa).

The protein belongs to the SecB family. Homotetramer, a dimer of dimers. One homotetramer interacts with 1 SecA dimer.

The protein localises to the cytoplasm. Its function is as follows. One of the proteins required for the normal export of preproteins out of the cell cytoplasm. It is a molecular chaperone that binds to a subset of precursor proteins, maintaining them in a translocation-competent state. It also specifically binds to its receptor SecA. The polypeptide is Protein-export protein SecB (Rhodopseudomonas palustris (strain HaA2)).